A 392-amino-acid polypeptide reads, in one-letter code: DNA replication and repair protein RecF (392 aa).

An ATP-binding site is contributed by Gly-30–Thr-37.

It belongs to the RecF family.

The protein resides in the cytoplasm. The RecF protein is involved in DNA metabolism; it is required for DNA replication and normal SOS inducibility. RecF binds preferentially to single-stranded, linear DNA. It also seems to bind ATP. This is DNA replication and repair protein RecF from Chloroflexus aurantiacus (strain ATCC 29364 / DSM 637 / Y-400-fl).